Reading from the N-terminus, the 171-residue chain is Sec-independent protein translocase protein TatB (171 aa).

A helical membrane pass occupies residues 2 to 22 (FDGIGFMELLLIGVLGLVVLG). The tract at residues 69 to 171 (SKGLSNLSPE…DTRSNPKANG (103 aa)) is disordered. Residues 88 to 97 (QAAQSVNRPY) show a composition bias toward polar residues. Low complexity-rich tracts occupy residues 114–130 (HSPVSSTVQTSQVHTSP) and 138–158 (PTATVEASPTSASPATPSEPS). Positions 160–171 (GADTRSNPKANG) are enriched in polar residues.

This sequence belongs to the TatB family. The Tat system comprises two distinct complexes: a TatABC complex, containing multiple copies of TatA, TatB and TatC subunits, and a separate TatA complex, containing only TatA subunits. Substrates initially bind to the TatABC complex, which probably triggers association of the separate TatA complex to form the active translocon.

Its subcellular location is the cell inner membrane. Functionally, part of the twin-arginine translocation (Tat) system that transports large folded proteins containing a characteristic twin-arginine motif in their signal peptide across membranes. Together with TatC, TatB is part of a receptor directly interacting with Tat signal peptides. TatB may form an oligomeric binding site that transiently accommodates folded Tat precursor proteins before their translocation. The chain is Sec-independent protein translocase protein TatB from Shewanella baltica (strain OS185).